The chain runs to 441 residues: Acetyltransferase TRI7 (441 aa).

The next 7 helical transmembrane spans lie at 14–34 (GILY…LIII), 75–95 (SLTL…LVLT), 158–178 (IWFI…LDII), 306–326 (IAFV…FCWG), 336–356 (LAFF…QALC), 377–397 (LVGY…YLYH), and 421–441 (TATM…GIEV).

It belongs to the wax synthase family.

The protein resides in the membrane. It participates in sesquiterpene biosynthesis; trichothecene biosynthesis. Functionally, acetyltransferase; part of the core gene cluster that mediates the biosynthesis of trichothecenes, a very large family of chemically related bicyclic sesquiterpene compounds acting as mycotoxins, including T2-toxin. The biosynthesis of trichothecenes begins with the cyclization of farnesyl diphosphate to trichodiene and is catalyzed by the trichodiene synthase TRI5. Trichodiene undergoes a series of oxygenations catalyzed by the cytochrome P450 monooxygenase TRI4. TRI4 controls the addition of four oxygens at C-2, C-3, C-11, and the C-12, C-13-epoxide to form the intermediate isotrichotriol. Isotrichotriol then undergoes a non-enzymatic isomerization and cyclization to form isotrichodermol. During this process, the oxygen at the C-2 position becomes the pyran ring oxygen and the hydroxyl group at C-11 is lost. More complex type A trichothecenes are built by modifying isotrichodermol through a series of paired hydroxylation and acetylation or acylation steps. Isotrichodermol is converted to isotrichodermin by the acetyltransferase TRI101. TRI101 encodes a C-3 transacetylase that acts as a self-protection or resistance factor during biosynthesis and that the presence of a free C-3 hydroxyl group is a key component of Fusarium trichothecene phytotoxicity. A second hydroxyl group is added to C-15 by the trichothecene C-15 hydroxylase TRI11, producing 15-decalonectrin, which is then acetylated by TRI3, producing calonectrin. A third hydroxyl group is added at C-4 by the cytochrome P450 monooxygenase TRI13, converting calonectrin to 3,15-diacetoxyspirpenol, which is subsequently acetylated by the acetyltransferase TRI7. A fourth hydroxyl group is added to C-8 by the cytochrome P450 monooxygenase TRI1, followed by the addition of an isovaleryl moiety by TRI16. Finally, the acetyl group is removed from the C-3 position by the trichothecene C-3 esterase TRI8 to produce T-2 toxin. This is Acetyltransferase TRI7 from Fusarium sporotrichioides.